A 185-amino-acid chain; its full sequence is Erythropoietin (185 aa).

An N-terminal signal peptide occupies residues Met-1–Pro-22. Intrachain disulfides connect Cys-32/Cys-180 and Cys-54/Cys-58.

It belongs to the EPO/TPO family.

It is found in the secreted. Functionally, erythropoietin is the principal hormone involved in the regulation of erythrocyte differentiation and the maintenance of a physiological level of circulating erythrocyte mass. In Epinephelus coioides (Orange-spotted grouper), this protein is Erythropoietin (epo).